A 255-amino-acid polypeptide reads, in one-letter code: Tabinhibitin 2 (255 aa).

Residues methionine 1–alanine 23 form the signal peptide. The Cell attachment site signature appears at arginine 32–aspartate 34. The region spanning leucine 67 to phenylalanine 211 is the SCP domain.

This sequence belongs to the CRISP family. As to expression, expressed in salivary glands.

It is found in the secreted. Inhibits platelet aggregation induced by all agonists tested (ADP, arachidonic acid, the thromboxane A2 analog U46619, thrombin, and snake venom snaclecs (TMVA that activates platelet through GPIB, and stejnulxin that specifically acts through GPVI (GP6))). May act by competing with fibrinogen for binding to glycoprotein IIb/IIIa (ITGA2B/ITGB3). The chain is Tabinhibitin 2 from Tabanus yao (Horsefly).